A 216-amino-acid polypeptide reads, in one-letter code: MFKIFGSKAQTFKPKKSIKKGTKQYELHQKIKETLGSGDLTDAIKLPPDETLFEWLSVNTIDFFNQSNLLYGSITEFCTPKYCPSMSAGPQYEFLWADGKEIKKPIRVSAPAYVDYLMTWIQVQLDDEDIFPTKPTEDMPKNFLPTIKAIFKRLFRVYAHIYYSHMDRVSVLGVEAHLNTAFRHFYLFIKEFNLVDKKEMLPLQNIIDKINARKDI.

4 residues coordinate Zn(2+): cysteine 78, cysteine 83, histidine 160, and histidine 165.

The protein belongs to the MOB1/phocein family.

In Dictyostelium discoideum (Social amoeba), this protein is MOB kinase activator-like 1 homolog C (mobC).